A 442-amino-acid polypeptide reads, in one-letter code: UDP-N-acetylmuramate--L-alanine ligase (442 aa).

109 to 115 (GAHGKTS) provides a ligand contact to ATP.

The protein belongs to the MurCDEF family.

It localises to the cytoplasm. The catalysed reaction is UDP-N-acetyl-alpha-D-muramate + L-alanine + ATP = UDP-N-acetyl-alpha-D-muramoyl-L-alanine + ADP + phosphate + H(+). Its pathway is cell wall biogenesis; peptidoglycan biosynthesis. Its function is as follows. Cell wall formation. This chain is UDP-N-acetylmuramate--L-alanine ligase, found in Streptococcus pyogenes serotype M6 (strain ATCC BAA-946 / MGAS10394).